The chain runs to 289 residues: Formamidopyrimidine-DNA glycosylase (289 aa).

The active-site Schiff-base intermediate with DNA is the Pro2. The active-site Proton donor is Glu3. Lys61 functions as the Proton donor; for beta-elimination activity in the catalytic mechanism. Positions 96, 115, and 161 each coordinate DNA. The FPG-type zinc-finger motif lies at 247–281; the sequence is SAYGQENLPCPRCGAPIKREKFMNRSSFSCPRCQP. Arg271 serves as the catalytic Proton donor; for delta-elimination activity.

This sequence belongs to the FPG family. As to quaternary structure, monomer. Requires Zn(2+) as cofactor.

It carries out the reaction Hydrolysis of DNA containing ring-opened 7-methylguanine residues, releasing 2,6-diamino-4-hydroxy-5-(N-methyl)formamidopyrimidine.. The catalysed reaction is 2'-deoxyribonucleotide-(2'-deoxyribose 5'-phosphate)-2'-deoxyribonucleotide-DNA = a 3'-end 2'-deoxyribonucleotide-(2,3-dehydro-2,3-deoxyribose 5'-phosphate)-DNA + a 5'-end 5'-phospho-2'-deoxyribonucleoside-DNA + H(+). Its function is as follows. Involved in base excision repair of DNA damaged by oxidation or by mutagenic agents. Acts as a DNA glycosylase that recognizes and removes damaged bases. Has a preference for oxidized purines, such as 7,8-dihydro-8-oxoguanine (8-oxoG). Has AP (apurinic/apyrimidinic) lyase activity and introduces nicks in the DNA strand. Cleaves the DNA backbone by beta-delta elimination to generate a single-strand break at the site of the removed base with both 3'- and 5'-phosphates. The protein is Formamidopyrimidine-DNA glycosylase of Rhodococcus erythropolis (strain PR4 / NBRC 100887).